A 395-amino-acid chain; its full sequence is Probable alcohol dehydrogenase EutG (395 aa).

Residues aspartate 57, 116 to 120 (GSVLD), 156 to 160 (TTAGT), lysine 178, and 197 to 201 (LTEGV) each bind NAD(+). Fe cation is bound by residues aspartate 212, histidine 216, histidine 281, and histidine 295. NAD(+) is bound by residues histidine 295 and aspartate 354.

It belongs to the iron-containing alcohol dehydrogenase family. Fe cation is required as a cofactor.

It localises to the bacterial microcompartment. The enzyme catalyses ethanol + NAD(+) = acetaldehyde + NADH + H(+). The protein operates within amine and polyamine degradation; ethanolamine degradation. Functionally, may act on the acetaldehyde produced from the degradation of ethanolamine, producing ethanol. Active on acetaldehyde and isobutyraldehyde in vitro. In vitro works equally well with NADH or NADPH. This chain is Probable alcohol dehydrogenase EutG (eutG), found in Escherichia coli (strain K12).